The chain runs to 693 residues: DNA-directed RNA polymerase subunit beta' (693 aa).

Zn(2+) is bound by residues Cys-76, Cys-78, Cys-94, and Cys-97. Asp-496, Asp-498, and Asp-500 together coordinate Mg(2+).

This sequence belongs to the RNA polymerase beta' chain family. RpoC1 subfamily. In terms of assembly, in plastids the minimal PEP RNA polymerase catalytic core is composed of four subunits: alpha, beta, beta', and beta''. When a (nuclear-encoded) sigma factor is associated with the core the holoenzyme is formed, which can initiate transcription. Mg(2+) serves as cofactor. It depends on Zn(2+) as a cofactor.

The protein localises to the plastid. It is found in the chloroplast. The enzyme catalyses RNA(n) + a ribonucleoside 5'-triphosphate = RNA(n+1) + diphosphate. DNA-dependent RNA polymerase catalyzes the transcription of DNA into RNA using the four ribonucleoside triphosphates as substrates. The polypeptide is DNA-directed RNA polymerase subunit beta' (Nuphar advena (Common spatterdock)).